We begin with the raw amino-acid sequence, 601 residues long: Probable inactive receptor kinase At1g27190 (601 aa).

An N-terminal signal peptide occupies residues 1–24; sequence MKKIFITLLWLLFISSFLCSSSSA. N52 carries N-linked (GlcNAc...) asparagine glycosylation. 5 LRR repeats span residues 73-95, 97-119, 122-144, 146-169, and 170-192; these read RIIS…LKLC, SLQS…ICSW, YLVT…IVEC, FLNA…SRLD, and RLRR…LARF. A helical transmembrane segment spans residues 221–241; sequence IIIVAGVLGAVGSLCVGLVIF. Phosphothreonine is present on T298. The Protein kinase domain occupies 301–586; the sequence is FSSGNIDVSS…KNMADKHGVS (286 aa). ATP is bound by residues 307 to 315 and K329; that span reads DVSSRTGVS. Phosphoserine is present on S383. T399 is subject to Phosphothreonine. Residue Y476 is modified to Phosphotyrosine. The residue at position 478 (S478) is a Phosphoserine. Phosphothreonine is present on T479. Residues S483 and S586 each carry the phosphoserine modification.

Belongs to the protein kinase superfamily. Ser/Thr protein kinase family.

Its subcellular location is the membrane. This Arabidopsis thaliana (Mouse-ear cress) protein is Probable inactive receptor kinase At1g27190.